Consider the following 390-residue polypeptide: Elongation factor Tu 2 (390 aa).

Residues Lys-10–Arg-201 form the tr-type G domain. A G1 region spans residues Gly-19–Thr-26. Residue Gly-19 to Thr-26 participates in GTP binding. Thr-26 lines the Mg(2+) pocket. Residues Gly-55–Ala-59 are G2. The tract at residues Asp-76–Gly-79 is G3. GTP contacts are provided by residues Asp-76–His-80 and Asn-131–Asp-134. The G4 stretch occupies residues Asn-131–Asp-134. Positions Ser-168–Leu-170 are G5.

This sequence belongs to the TRAFAC class translation factor GTPase superfamily. Classic translation factor GTPase family. EF-Tu/EF-1A subfamily. In terms of assembly, monomer.

Its subcellular location is the cytoplasm. It carries out the reaction GTP + H2O = GDP + phosphate + H(+). In terms of biological role, GTP hydrolase that promotes the GTP-dependent binding of aminoacyl-tRNA to the A-site of ribosomes during protein biosynthesis. This is Elongation factor Tu 2 from Wolbachia sp. subsp. Brugia malayi (strain TRS).